Here is a 345-residue protein sequence, read N- to C-terminus: Probable S-adenosylmethionine carrier 2, chloroplastic (345 aa).

The transit peptide at 1 to 31 (MTKALSGFCCSLSLSTLVRSSSSHMDSDIVS) directs the protein to the chloroplast. 3 Solcar repeats span residues 76–148 (RVLY…TKQK), 157–239 (LSAV…LRIG), and 252–334 (ENAM…TKQI). Transmembrane regions (helical) follow at residues 82–102 (LITG…IDTI), 121–141 (YSGL…FFGV), 156–176 (NLSA…SSIV), 254–274 (AMIG…LDVI), and 309–329 (GMGP…GVLE).

It belongs to the mitochondrial carrier (TC 2.A.29) family. In terms of tissue distribution, expressed at low levels in seedlings, leaves, flowers, stems and roots.

The protein resides in the plastid. The protein localises to the chloroplast membrane. In terms of biological role, probable S-adenosylmethionine (SAM) transporter able to catalyze both uniport and exchange reactions through membranes. The protein is Probable S-adenosylmethionine carrier 2, chloroplastic (SAMC2) of Arabidopsis thaliana (Mouse-ear cress).